A 278-amino-acid chain; its full sequence is MASGKHHQPGGTRSLTMQKVSLRVTPRLVLEVNRHNAICVATNVPEFYNARGDLNIRDLRAHVKARMISSQFCGYVLVSLLDSEDQVDHLNIFPHVFSERMILYKPNNVNLMEMCALLSMIENAKSPSIGLCREVLGRLTLLHSKCNNLDSLFLYNGARTLLSTLVKYHDLEEGAATPGPWNEGLSLFKLHKELKRAPSEARDLMQSLFLTSGKMGCLARSPKDYCADLNKEEDANSGFTFNLFYQDSLLTKHFQCQTVLQTLRRKCLGSDTVSKIIP.

The protein belongs to the herpesviridae cytoplasmic envelopment protein 1 family. Interacts with BSRF1 tegument protein; the BBRF2-BSRF1 complexes oligomerize and might play a role in tethering the viral nucleocapsids to the host Golgi membrane during secondary envelopment.

It is found in the virion. The protein localises to the virion tegument. Its subcellular location is the host cytoplasm. It localises to the host Golgi apparatus. Functionally, plays a critical role in cytoplasmic virus egress. Participates in the final step of tegumentation and envelope acquisition within the host cytoplasm. The sequence is that of Cytoplasmic envelopment protein 1 from Homo sapiens (Human).